Consider the following 422-residue polypeptide: Phagosome assembly factor 1 (422 aa).

Belongs to the PHAF1 family. In terms of assembly, interacts with BCAS3; the interaction is requrired for the association with the phagophore.

It is found in the cytoplasm. The protein localises to the preautophagosomal structure. Its function is as follows. Plays a regulatory role in autophagic activity. In complex with BCAS3, associates with the autophagosome formation site during both non-selective and selective autophagy. In Mus musculus (Mouse), this protein is Phagosome assembly factor 1.